The primary structure comprises 348 residues: Dihydroorotase (348 aa).

Zn(2+)-binding residues include histidine 14 and histidine 16. Substrate contacts are provided by residues 16-18 (HLR) and asparagine 42. Lysine 100, histidine 137, and histidine 175 together coordinate Zn(2+). Lysine 100 is modified (N6-carboxylysine). Histidine 137 contributes to the substrate binding site. Leucine 220 serves as a coordination point for substrate. Aspartate 248 contributes to the Zn(2+) binding site. Aspartate 248 is an active-site residue. Substrate-binding residues include histidine 252 and alanine 264.

It belongs to the metallo-dependent hydrolases superfamily. DHOase family. Class II DHOase subfamily. Homodimer. The cofactor is Zn(2+).

The enzyme catalyses (S)-dihydroorotate + H2O = N-carbamoyl-L-aspartate + H(+). The protein operates within pyrimidine metabolism; UMP biosynthesis via de novo pathway; (S)-dihydroorotate from bicarbonate: step 3/3. Functionally, catalyzes the reversible cyclization of carbamoyl aspartate to dihydroorotate. The chain is Dihydroorotase from Pseudomonas aeruginosa (strain LESB58).